The chain runs to 280 residues: Phosphatidylglycerol--prolipoprotein diacylglyceryl transferase (280 aa).

Transmembrane regions (helical) follow at residues 21–41 (WYGIIMAVAIVLATWMAISEG), 54–74 (LLLWAVPLGYVGARIYYVIFE), and 88–108 (IWNGGIAIYGGLIAGLIVLLI). Residue Arg136 coordinates a 1,2-diacyl-sn-glycero-3-phospho-(1'-sn-glycerol). 3 helical membrane-spanning segments follow: residues 176–196 (QPTFLYESFFNLIGLIIILSL), 206–226 (GEVFMSYLLWYSVVRFFVEGM), and 236–256 (IIRVSQALSLVLFIATIILWI).

Belongs to the Lgt family.

It is found in the cell membrane. The catalysed reaction is L-cysteinyl-[prolipoprotein] + a 1,2-diacyl-sn-glycero-3-phospho-(1'-sn-glycerol) = an S-1,2-diacyl-sn-glyceryl-L-cysteinyl-[prolipoprotein] + sn-glycerol 1-phosphate + H(+). It participates in protein modification; lipoprotein biosynthesis (diacylglyceryl transfer). In terms of biological role, catalyzes the transfer of the diacylglyceryl group from phosphatidylglycerol to the sulfhydryl group of the N-terminal cysteine of a prolipoprotein, the first step in the formation of mature lipoproteins. The sequence is that of Phosphatidylglycerol--prolipoprotein diacylglyceryl transferase from Lactobacillus acidophilus (strain ATCC 700396 / NCK56 / N2 / NCFM).